Here is a 701-residue protein sequence, read N- to C-terminus: Elongation factor G (701 aa).

One can recognise a tr-type G domain in the interval 8–290 (KHYRNIGISA…AVIEYLPAPI (283 aa)). Residues 17-24 (AHIDAGKT), 88-92 (DTPGH), and 142-145 (NKMD) each bind GTP.

It belongs to the TRAFAC class translation factor GTPase superfamily. Classic translation factor GTPase family. EF-G/EF-2 subfamily.

The protein resides in the cytoplasm. In terms of biological role, catalyzes the GTP-dependent ribosomal translocation step during translation elongation. During this step, the ribosome changes from the pre-translocational (PRE) to the post-translocational (POST) state as the newly formed A-site-bound peptidyl-tRNA and P-site-bound deacylated tRNA move to the P and E sites, respectively. Catalyzes the coordinated movement of the two tRNA molecules, the mRNA and conformational changes in the ribosome. In Hamiltonella defensa subsp. Acyrthosiphon pisum (strain 5AT), this protein is Elongation factor G.